The chain runs to 242 residues: NAD(P)H-quinone oxidoreductase subunit K (242 aa).

4 residues coordinate [4Fe-4S] cluster: cysteine 59, cysteine 60, cysteine 124, and cysteine 155.

Belongs to the complex I 20 kDa subunit family. In terms of assembly, NDH-1 can be composed of about 15 different subunits; different subcomplexes with different compositions have been identified which probably have different functions. Requires [4Fe-4S] cluster as cofactor.

It localises to the cellular thylakoid membrane. It catalyses the reaction a plastoquinone + NADH + (n+1) H(+)(in) = a plastoquinol + NAD(+) + n H(+)(out). It carries out the reaction a plastoquinone + NADPH + (n+1) H(+)(in) = a plastoquinol + NADP(+) + n H(+)(out). NDH-1 shuttles electrons from an unknown electron donor, via FMN and iron-sulfur (Fe-S) centers, to quinones in the respiratory and/or the photosynthetic chain. The immediate electron acceptor for the enzyme in this species is believed to be plastoquinone. Couples the redox reaction to proton translocation, and thus conserves the redox energy in a proton gradient. Cyanobacterial NDH-1 also plays a role in inorganic carbon-concentration. The chain is NAD(P)H-quinone oxidoreductase subunit K from Synechococcus sp. (strain RCC307).